The sequence spans 170 residues: E1B protein, small T-antigen (170 aa).

Residues 137 to 170 (PAQPPHGLDPVREEEEEEEEEENLRAGLDPQTEL) are disordered. Residues 148-158 (REEEEEEEEEE) are compositionally biased toward acidic residues.

It belongs to the adenoviridae E1B 19 kDa protein family.

The protein resides in the host cell membrane. The protein localises to the host nucleus envelope. It localises to the host nucleus lamina. Its function is as follows. Putative adenovirus Bcl-2 homolog that inhibits apoptosis induced by TNF or FAS pathways, as well as p53-mediated apoptosis. Without E1B 19K function, virus production is compromised because of premature death of host cell. Interacts with Bax protein in cell lysates. This Homo sapiens (Human) protein is E1B protein, small T-antigen.